The primary structure comprises 639 residues: Tubulin--tyrosine ligase-like protein 12 (639 aa).

One can recognise a TTL domain in the interval 295 to 639 (PQGHVFRVHC…TDNCHVTRII (345 aa)). ATP is bound by residues 445-448 (SKYI), Lys463, and Asp465.

It belongs to the tubulin--tyrosine ligase family. Interacts with MAVS; the interaction prevents MAVS binding to TBK1 and IKBKE. Interacts (via N-terminus) with TBK1 (via protein kinase domain). Interacts (via TTL domain) with IKBKE (via protein kinase domain). Interacts with tubulin alpha. Interacts with histone H3 and histone H4 (when trimethylated at 'Lys-20' (H4K20me3)). Interacts with CBX3. Widely expressed with highest levels in brain, kidney, liver, lung, muscle and testis.

It localises to the cytoplasm. Its subcellular location is the midbody. The protein resides in the cytoskeleton. The protein localises to the microtubule organizing center. It is found in the centrosome. It localises to the spindle. Its subcellular location is the nucleus. Functionally, negatively regulates post-translational modifications of tubulin, including detyrosination of the C-terminus and polyglutamylation of glutamate residues. Also, indirectly promotes histone H4 trimethylation at 'Lys-20' (H4K20me3). Probably by controlling tubulin and/or histone H4 post-translational modifications, plays a role in mitosis and in maintaining chromosome number stability. During RNA virus-mediated infection, acts as a negative regulator of the RIG-I pathway by preventing MAVS binding to TBK1 and IKBKE. The sequence is that of Tubulin--tyrosine ligase-like protein 12 from Mus musculus (Mouse).